The chain runs to 483 residues: Replication factor C large subunit (483 aa).

Residue 43 to 50 (GKPGIGKT) participates in ATP binding. Basic and acidic residues predominate over residues 417–442 (ELKKKKKEEDAKGKKARGSKKEKEPI). Residues 417-483 (ELKKKKKEED…KSSQSTLFSF (67 aa)) form a disordered region. The segment covering 448–457 (SIDSFSSQEP) has biased composition (polar residues).

The protein belongs to the activator 1 small subunits family. RfcL subfamily. Heteromultimer composed of small subunits (RfcS) and large subunits (RfcL).

Part of the RFC clamp loader complex which loads the PCNA sliding clamp onto DNA. In Methanospirillum hungatei JF-1 (strain ATCC 27890 / DSM 864 / NBRC 100397 / JF-1), this protein is Replication factor C large subunit.